The primary structure comprises 324 residues: 3'-5' exoribonuclease YhaM (324 aa).

Residues 163-279 form the HD domain; sequence HVVSMLELAK…LHYIDNLDAK (117 aa).

This sequence belongs to the YhaM family.

Shows a 3'-5' exoribonuclease activity. In Geobacillus sp. (strain WCH70), this protein is 3'-5' exoribonuclease YhaM.